A 203-amino-acid polypeptide reads, in one-letter code: A-type ATP synthase subunit E (203 aa).

This sequence belongs to the V-ATPase E subunit family. Has multiple subunits with at least A(3), B(3), C, D, E, F, H, I and proteolipid K(x).

The protein resides in the cell membrane. Functionally, component of the A-type ATP synthase that produces ATP from ADP in the presence of a proton gradient across the membrane. This Methanococcus maripaludis (strain C6 / ATCC BAA-1332) protein is A-type ATP synthase subunit E.